Here is a 356-residue protein sequence, read N- to C-terminus: MEGPAFSKPLKDKINPWGPLIVLGILIRAGVSVQRDSPHQVFNVTWRVTNLMTGQTANATSLLGTMTDAFPKLYFDLCDLIGNDWDETRLGCRTPGEGKRARTFDLYVCPGHTVPTGCGGPREGYCGKWGCETTGQAYWKPSSSWDLISLKRGNTPKDRGPCYDSSVSSGVQGATPGGRCNPLVLKFTDAGKKASWDAPKVWGLRLYRSTGTDPVTRFSLTRQVLNIGPRVPIGPNPVISDQLPPSRPAQIMLPRPPQPPPPGTASIVPETAPPSQQPGTRDRLLNLVNKAYQALNLTSPDKTQECWLCLVSRPPYYEGVAVLGTNSNHTTLISTIMGLLIILLLLLILLLWTLHS.

Residues 1 to 32 form the signal peptide; the sequence is MEGPAFSKPLKDKINPWGPLIVLGILIRAGVS. At 33-331 the chain is on the virion surface side; the sequence is VQRDSPHQVF…VLGTNSNHTT (299 aa). N43 and N58 each carry an N-linked (GlcNAc...) asparagine; by host glycan. The tract at residues 247 to 279 is disordered; the sequence is RPAQIMLPRPPQPPPPGTASIVPETAPPSQQPG. Positions 254 to 263 are enriched in pro residues; the sequence is PRPPQPPPPG. N296 carries an N-linked (GlcNAc...) asparagine; by host glycan. The CXXC signature appears at 306 to 309; the sequence is CWLC. N328 carries N-linked (GlcNAc...) asparagine; by host glycosylation. Residues 332-352 form a helical membrane-spanning segment; that stretch reads LISTIMGLLIILLLLLILLLW. The Intravirion portion of the chain corresponds to 353–356; the sequence is TLHS.

In terms of assembly, homooligomer. Forms heterooligomers with mouse EPOR, probably via their respective transmembrane domains. BB6 deletion mutant does not interact with mouse MST1R isoform sf-Stk.

The protein resides in the host endoplasmic reticulum membrane. Its subcellular location is the host cell membrane. It is found in the virion membrane. This envelope-like membrane glycoprotein is responsible for ligand-independent activation of the erythropoietin receptor EPOR leading to the abnormally rapid proliferation of erythroid precursor cells. In the first stage of Friend disease, constitutive activation of the EPOR by gp42 causes uncontrolled, polyclonal proliferation of infected erythroblasts, leading to polycythemia (massive increase in the number of mature red cells). Host susceptibility to SSFV-induced erythroblastosis usually depends on the expression of the truncated isoform of MST1R receptor tyrosine kinase (MST1R isoform sf-Stk), but the deletion mutant BB6 apparently can overcome its absence. The polypeptide is Glycoprotein 42 (env) (Mus musculus (Mouse)).